A 494-amino-acid polypeptide reads, in one-letter code: tRNA (guanine(37)-N(1))-methyltransferase (494 aa).

The transit peptide at 1–32 directs the protein to the mitochondrion; it reads MRIRRILYFYGNLPNTYTANVLRRLAFSCWHT. S-adenosyl-L-methionine is bound by residues His278, 316–317, 344–345, and Asn377; these read DL and DG. The disordered stretch occupies residues 468 to 494; the sequence is DTGEPESKRPRTAEAFPLPHVQQSRNS.

This sequence belongs to the class I-like SAM-binding methyltransferase superfamily. TRM5/TYW2 family. In terms of assembly, monomer.

Its subcellular location is the mitochondrion matrix. It localises to the nucleus. The protein resides in the cytoplasm. It carries out the reaction guanosine(37) in tRNA + S-adenosyl-L-methionine = N(1)-methylguanosine(37) in tRNA + S-adenosyl-L-homocysteine + H(+). Functionally, involved in mitochondrial tRNA methylation. Specifically methylates the N1 position of guanosine-37 in various tRNAs. Methylation is not dependent on the nature of the nucleoside 5' of the target nucleoside. This is the first step in the biosynthesis of wybutosine (yW), a modified base adjacent to the anticodon of tRNAs and required for accurate decoding. The protein is tRNA (guanine(37)-N(1))-methyltransferase (trmt5) of Xenopus tropicalis (Western clawed frog).